A 210-amino-acid chain; its full sequence is MKTGKFIVIEGLEGAGKSSTHQVVVNTLTEFGIHEVVFTREPGGTPLAEKLRYLIKHEAEELVTAKAELLMLYAARVQLVENVIKPALARGKWVVGDRHDLSSQAYQGGGRGLDRHLMTTLKNAVLGDFKPDFTLYLDIEPEIGLARAKGRGELDRIEQQNLDFFHRTRERYLQLVQQDPNAVLINAGQPIELVQQDIRKAVQKFIEENV.

11–18 serves as a coordination point for ATP; sequence GLEGAGKS.

The protein belongs to the thymidylate kinase family.

It carries out the reaction dTMP + ATP = dTDP + ADP. Phosphorylation of dTMP to form dTDP in both de novo and salvage pathways of dTTP synthesis. In Histophilus somni (strain 2336) (Haemophilus somnus), this protein is Thymidylate kinase.